Consider the following 210-residue polypeptide: Oxygen-insensitive NADPH nitroreductase (210 aa).

150 to 155 (GVSLMG) serves as a coordination point for NADP(+).

The protein belongs to the nitroreductase family.

Functionally, reduction of a variety of nitroaromatic compounds using NADPH as source of reducing equivalents; two electrons are transferred. Capable of reducing metronidazole; inactive RdxA renders the bacterium resistant to this compound. The reduction of metronidazole generates hydroxylamine, a potent mutagen and bactericide. The polypeptide is Oxygen-insensitive NADPH nitroreductase (rdxA) (Helicobacter pylori (strain ATCC 700392 / 26695) (Campylobacter pylori)).